We begin with the raw amino-acid sequence, 366 residues long: Protein FAM110B (366 aa).

3 disordered regions span residues 127-152 (SSEGSSSGSGHKHSSRNWPPHRDTTD), 163-182 (KVYPTPGHGSPQESSSHVSR), and 216-252 (CSSSAPPLPPKPKVAAMKSPEADQVEPACGVSRRPSL). Residues serine 234 and serine 297 each carry the phosphoserine modification. Positions 313–333 (DCEQSQDSNSDLRNDDSANDR) are disordered. Residues 322–331 (SDLRNDDSAN) show a composition bias toward basic and acidic residues.

The protein belongs to the FAM110 family.

It localises to the cytoplasm. Its subcellular location is the cytoskeleton. The protein resides in the microtubule organizing center. The protein localises to the centrosome. This is Protein FAM110B (Fam110b) from Mus musculus (Mouse).